The primary structure comprises 149 residues: SsrA-binding protein (149 aa).

This sequence belongs to the SmpB family.

The protein localises to the cytoplasm. In terms of biological role, required for rescue of stalled ribosomes mediated by trans-translation. Binds to transfer-messenger RNA (tmRNA), required for stable association of tmRNA with ribosomes. tmRNA and SmpB together mimic tRNA shape, replacing the anticodon stem-loop with SmpB. tmRNA is encoded by the ssrA gene; the 2 termini fold to resemble tRNA(Ala) and it encodes a 'tag peptide', a short internal open reading frame. During trans-translation Ala-aminoacylated tmRNA acts like a tRNA, entering the A-site of stalled ribosomes, displacing the stalled mRNA. The ribosome then switches to translate the ORF on the tmRNA; the nascent peptide is terminated with the 'tag peptide' encoded by the tmRNA and targeted for degradation. The ribosome is freed to recommence translation, which seems to be the essential function of trans-translation. This chain is SsrA-binding protein, found in Carboxydothermus hydrogenoformans (strain ATCC BAA-161 / DSM 6008 / Z-2901).